The sequence spans 150 residues: Large ribosomal subunit protein bL9 (150 aa).

This sequence belongs to the bacterial ribosomal protein bL9 family.

Its function is as follows. Binds to the 23S rRNA. The polypeptide is Large ribosomal subunit protein bL9 (Streptococcus agalactiae serotype III (strain NEM316)).